A 178-amino-acid chain; its full sequence is Large ribosomal subunit protein bL19 (178 aa).

It belongs to the bacterial ribosomal protein bL19 family.

This protein is located at the 30S-50S ribosomal subunit interface and may play a role in the structure and function of the aminoacyl-tRNA binding site. The protein is Large ribosomal subunit protein bL19 of Rhizobium etli (strain ATCC 51251 / DSM 11541 / JCM 21823 / NBRC 15573 / CFN 42).